A 129-amino-acid polypeptide reads, in one-letter code: Trefoil factor 2 (129 aa).

The N-terminal stretch at 1–23 (MGPRGLQLLAVLLALGLCAPAGA) is a signal peptide. Pyrrolidone carboxylic acid is present on Q24. 2 P-type domains span residues 29–73 (CQCS…FHPL) and 79–122 (EQCV…FFPI). 7 disulfide bridges follow: C29–C127, C31–C58, C42–C57, C52–C69, C81–C107, C91–C106, and C101–C118.

Its subcellular location is the secreted. In terms of biological role, inhibits gastrointestinal motility and gastric acid secretion. Could function as a structural component of gastric mucus, possibly by stabilizing glycoproteins in the mucus gel through interactions with carbohydrate side chains. The chain is Trefoil factor 2 (TFF2) from Canis lupus familiaris (Dog).